The following is a 36-amino-acid chain: Protein YmgL (36 aa).

The protein is Protein YmgL of Escherichia coli (strain K12).